The chain runs to 1088 residues: Ran-binding protein 17 (1088 aa).

The residue at position 2 (alanine 2) is an N-acetylalanine. Serine 569 bears the Phosphoserine mark.

It belongs to the exportin family. In terms of assembly, binds to nucleoporins and the GTP-bound form of Ran. As to expression, highly expressed in primary spermatocytes and very weakly in pancreas.

Its subcellular location is the cytoplasm. It is found in the nucleus. The protein localises to the nuclear pore complex. May function as a nuclear transport receptor. The chain is Ran-binding protein 17 (Ranbp17) from Mus musculus (Mouse).